We begin with the raw amino-acid sequence, 1390 residues long: DNA-directed RNA polymerase subunit beta'' (1390 aa).

4 residues coordinate Zn(2+): Cys-224, Cys-295, Cys-302, and Cys-305.

Belongs to the RNA polymerase beta' chain family. RpoC2 subfamily. As to quaternary structure, in plastids the minimal PEP RNA polymerase catalytic core is composed of four subunits: alpha, beta, beta', and beta''. When a (nuclear-encoded) sigma factor is associated with the core the holoenzyme is formed, which can initiate transcription. Requires Zn(2+) as cofactor.

It is found in the plastid. The protein resides in the chloroplast. It catalyses the reaction RNA(n) + a ribonucleoside 5'-triphosphate = RNA(n+1) + diphosphate. DNA-dependent RNA polymerase catalyzes the transcription of DNA into RNA using the four ribonucleoside triphosphates as substrates. The polypeptide is DNA-directed RNA polymerase subunit beta'' (Daucus carota (Wild carrot)).